The primary structure comprises 275 residues: MAIRSYKAYTPGTRNRTISEFSEITKSEPEKSLTFLKHRKKGRNNRGIITTAHKGGGSKRLYRIIDFKRDLKLVPAKVAAIEYDPNRNARIALLHYQNGEKGYILHARGLAVGNMVYSGPNAPIEVGNSLPLSEIPLATEIHNIELTPGKGGQLVRSAGSSAQLLAKEGNYVTLRLPSGEMRFVRKECYATIGQIGNAEISNISIGKAGRNRWLGIRPTVRGVVKNPVDHPHGGGEGRAPIGRSTPVTPWGKPALGRRTRRTKKYSDNLIIRRRK.

The segment at 225 to 259 (KNPVDHPHGGGEGRAPIGRSTPVTPWGKPALGRRT) is disordered.

Belongs to the universal ribosomal protein uL2 family. In terms of assembly, part of the 50S ribosomal subunit.

The protein resides in the plastid. Its subcellular location is the cyanelle. The protein is Large ribosomal subunit protein uL2c (rpl2) of Cyanophora paradoxa.